Reading from the N-terminus, the 185-residue chain is Ribosome-recycling factor (185 aa).

Residues 137 to 166 (DGLKKAEKDGDIGQDESRGQSEKVQKMTDD) form a disordered region.

It belongs to the RRF family.

The protein localises to the cytoplasm. Functionally, responsible for the release of ribosomes from messenger RNA at the termination of protein biosynthesis. May increase the efficiency of translation by recycling ribosomes from one round of translation to another. This chain is Ribosome-recycling factor, found in Agrobacterium fabrum (strain C58 / ATCC 33970) (Agrobacterium tumefaciens (strain C58)).